The sequence spans 280 residues: uncharacterized protein (280 aa).

The N-terminal 51 residues, 1-51, are a transit peptide targeting the chloroplast; the sequence is MATSLLLRHSSAVFFSQSSFFTKNKSFRSFTSIKMEKGEAENAVKTKKVFV.

This sequence belongs to the NAD(P)-dependent epimerase/dehydratase family.

It localises to the plastid. The protein localises to the chloroplast. The protein resides in the plastoglobule. This is an uncharacterized protein from Arabidopsis thaliana (Mouse-ear cress).